We begin with the raw amino-acid sequence, 469 residues long: Protein DETOXIFICATION 18 (469 aa).

12 helical membrane-spanning segments follow: residues 40–60 (LPMI…VMFA), 73–93 (LANS…SGAL), 121–141 (LVFT…FLLL), 152–172 (ALYM…QNIL), 183–203 (PLVL…YALV), 206–226 (AGLG…IAFV), 252–274 (HVVL…YWAF), 293–313 (LVAI…GLSA), 344–364 (VLAL…VGLF), 374–394 (FASL…QGVL), 406–426 (LATV…SVLC), and 438–458 (WIGL…MTIF).

It belongs to the multi antimicrobial extrusion (MATE) (TC 2.A.66.1) family.

Its subcellular location is the membrane. The sequence is that of Protein DETOXIFICATION 18 from Arabidopsis thaliana (Mouse-ear cress).